We begin with the raw amino-acid sequence, 219 residues long: tRNA (guanine-N(7)-)-methyltransferase (219 aa).

S-adenosyl-L-methionine contacts are provided by E43, D68, E101, and N124. Residues K128 and D160 each contribute to the substrate site.

The protein belongs to the class I-like SAM-binding methyltransferase superfamily. TrmB family.

It carries out the reaction guanosine(46) in tRNA + S-adenosyl-L-methionine = N(7)-methylguanosine(46) in tRNA + S-adenosyl-L-homocysteine. It participates in tRNA modification; N(7)-methylguanine-tRNA biosynthesis. Functionally, catalyzes the formation of N(7)-methylguanine at position 46 (m7G46) in tRNA. The polypeptide is tRNA (guanine-N(7)-)-methyltransferase (Clostridium botulinum (strain Eklund 17B / Type B)).